Reading from the N-terminus, the 397-residue chain is MTAAAAAGEIPAEDAPPPGALYSFGTPWPEFNEGISYIDTFRCADAGATTTLIEFYSTSYKSSAPLPGWIKRIRDGQITVDGEVATDPDMILREGSKLVYHRLPWQEPFAPHLLDVLYEDDDMIALNKPSGLQVLPKGLFQQRTVLAQLQLKDWKMPSSFCSKRKDAQSHPVPVHRLGRGTSGLLLCAKTKLAKAQLAAYFAEGATNAGKSRDETDICKARKISKFYRALVTGILENDEVMITQPIGLVRYPGVAEGLYAACSSGKPAMSKVRVLERLKIHNHTLIQVEIHSGRPHQIRIHLAYIGHPLVDDPLYGIGGQPKFDEPEPTSTADSFAYDGGYERPLQPVPGDCGYHLHAHWLVLCHPTTNEMIKITAPLPHILQTREEQQDTAKLLGG.

One can recognise an S4 RNA-binding domain in the interval 64–114; sequence APLPGWIKRIRDGQITVDGEVATDPDMILREGSKLVYHRLPWQEPFAPHLL.

The protein belongs to the pseudouridine synthase RluA family.

The enzyme catalyses a uridine in RNA = a pseudouridine in RNA. The sequence is that of RNA pseudouridine synthase 5 from Oryza sativa subsp. japonica (Rice).